Consider the following 205-residue polypeptide: Pyridoxine/pyridoxamine 5'-phosphate oxidase (205 aa).

Residues 53 to 58 (RMVLLK), 68 to 69 (YT), Lys-75, and Gln-97 each bind FMN. Lys-58 contributes to the substrate binding site. Substrate is bound by residues Tyr-115, Arg-119, and Ser-123. FMN-binding positions include 132–133 (QS) and Trp-177. 183 to 185 (RLH) is a binding site for substrate. Arg-187 provides a ligand contact to FMN.

The protein belongs to the pyridoxamine 5'-phosphate oxidase family. Homodimer. FMN is required as a cofactor.

The catalysed reaction is pyridoxamine 5'-phosphate + O2 + H2O = pyridoxal 5'-phosphate + H2O2 + NH4(+). It catalyses the reaction pyridoxine 5'-phosphate + O2 = pyridoxal 5'-phosphate + H2O2. It functions in the pathway cofactor metabolism; pyridoxal 5'-phosphate salvage; pyridoxal 5'-phosphate from pyridoxamine 5'-phosphate: step 1/1. Its pathway is cofactor metabolism; pyridoxal 5'-phosphate salvage; pyridoxal 5'-phosphate from pyridoxine 5'-phosphate: step 1/1. Functionally, catalyzes the oxidation of either pyridoxine 5'-phosphate (PNP) or pyridoxamine 5'-phosphate (PMP) into pyridoxal 5'-phosphate (PLP). This is Pyridoxine/pyridoxamine 5'-phosphate oxidase from Mesorhizobium japonicum (strain LMG 29417 / CECT 9101 / MAFF 303099) (Mesorhizobium loti (strain MAFF 303099)).